The sequence spans 525 residues: MATLLRSKLSNVATSVSNKSQAKMSGMFARMGFQAATDEEAVGFAHCDDLDFEHRQGLQMDILKAEGEPCGDEGAEAPVEGDIHYQRGSGAPLPPSGSKDQVGGGGEFGGHDKPKITAWEAGWNVTNAIQGMFVLGLPYAILHGGYLGLFLIIFAAVVCCYTGKILIACLYEENEDGEVVRVRDSYVAIANACCAPRFPTLGGRVVNVAQIIELVMTCILYVVVSGNLMYNSFPGLPVSQKSWSIIATAVLLPCAFLKNLKAVSKFSLLCTLAHFVINILVIAYCLSRARDWAWEKVKFYIDVKKFPISIGIIVFSYTSQIFLPSLEGNMQQPSEFHCMMNWTHIAACVLKGLFALVAYLTWADETKEVITDNLPGSIRAVVNIFLVAKALLSYPLPFFAAVEVLEKSLFQEGSRAFFPACYSGDGRLKSWGLTLRCALVVFTLLMAIYVPHFALLMGLTGSLTGAGLCFLLPSLFHLRLLWRKLLWHQVFFDVAIFVIGGICSVSGFVHSLEGLIEAYRTNAED.

Residues 1-132 (MATLLRSKLS…WNVTNAIQGM (132 aa)) lie on the Cytoplasmic side of the membrane. Residues 83–107 (IHYQRGSGAPLPPSGSKDQVGGGGE) form a disordered region. A helical transmembrane segment spans residues 133-153 (FVLGLPYAILHGGYLGLFLII). The Lumenal, vesicle segment spans residues 154-204 (FAAVVCCYTGKILIACLYEENEDGEVVRVRDSYVAIANACCAPRFPTLGGR). Tyrosine 186 carries the post-translational modification 3'-nitrotyrosine. The helical transmembrane segment at 205-225 (VVNVAQIIELVMTCILYVVVS) threads the bilayer. At 226 to 265 (GNLMYNSFPGLPVSQKSWSIIATAVLLPCAFLKNLKAVSK) the chain is on the cytoplasmic side. Residues 266 to 286 (FSLLCTLAHFVINILVIAYCL) form a helical membrane-spanning segment. The Lumenal, vesicle segment spans residues 287-305 (SRARDWAWEKVKFYIDVKK). Residues 306 to 326 (FPISIGIIVFSYTSQIFLPSL) traverse the membrane as a helical segment. The Cytoplasmic segment spans residues 327 to 341 (EGNMQQPSEFHCMMN). Residues 342-362 (WTHIAACVLKGLFALVAYLTW) form a helical membrane-spanning segment. Residues 363 to 383 (ADETKEVITDNLPGSIRAVVN) are Lumenal, vesicle-facing. Residues 384–404 (IFLVAKALLSYPLPFFAAVEV) traverse the membrane as a helical segment. Residues 405–438 (LEKSLFQEGSRAFFPACYSGDGRLKSWGLTLRCA) are Cytoplasmic-facing. The helical transmembrane segment at 439-459 (LVVFTLLMAIYVPHFALLMGL) threads the bilayer. The Lumenal, vesicle portion of the chain corresponds to 460-461 (TG). The helical transmembrane segment at 462 to 482 (SLTGAGLCFLLPSLFHLRLLW) threads the bilayer. Residues 483-489 (RKLLWHQ) lie on the Cytoplasmic side of the membrane. A helical membrane pass occupies residues 490–510 (VFFDVAIFVIGGICSVSGFVH). Over 511–525 (SLEGLIEAYRTNAED) the chain is Lumenal, vesicle.

Belongs to the amino acid/polyamine transporter 2 family. As to expression, retina. Expressed throughout the horizontal cells or more specifically at the terminals.

It is found in the cytoplasmic vesicle membrane. The protein resides in the presynapse. The catalysed reaction is 4-aminobutanoate(out) + n H(+)(in) = 4-aminobutanoate(in) + n H(+)(out). It catalyses the reaction glycine(out) + n H(+)(in) = glycine(in) + n H(+)(out). It carries out the reaction beta-alanine(out) + n H(+)(in) = beta-alanine(in) + n H(+)(out). Its function is as follows. Antiporter that exchanges vesicular protons for cytosolic 4-aminobutanoate or to a lesser extend glycine, thus allowing their secretion from nerve terminals. The transport is equally dependent on the chemical and electrical components of the proton gradient. May also transport beta-alanine. Acidification of GABAergic synaptic vesicles is a prerequisite for 4-aminobutanoate uptake. The chain is Vesicular inhibitory amino acid transporter from Homo sapiens (Human).